The chain runs to 385 residues: HAT1-interacting factor 1 (385 aa).

The interval 80–199 (GNLFGDALLA…RKSGFHIYFE (120 aa)) is important for interaction with heterotetrameric histone H3 and H4 and for interaction with dimeric histone H2A and H2B. Low complexity-rich tracts occupy residues 85-97 (DALLAGDDGSGSE) and 105-116 (DVSNGEEGNENG). The disordered stretch occupies residues 85 to 163 (DALLAGDDGS…EEENVEKEEE (79 aa)). Residues 129 to 160 (DQEEEDLTGDVDSGDSEDSGEGSEEEEENVEK) show a composition bias toward acidic residues. S174 carries the phosphoserine modification. 3 TPR repeats span residues 186-220 (VSQLRKSGFHIYFENDLYENALDLLAQALMLLGRP), 229-262 (ENSRLRIGDVYILMGDIEREAEMFSRAIHHYLKA), and 289-322 (ALRWVDQVPAKDKLKRFKHAKALLEKHMTTRPKD). The interval 248–332 (EAEMFSRAIH…SELQQARLAQ (85 aa)) is interaction with dimeric histone H2A and H2B. Residues 340 to 385 (VQENQQHGSKRPLSQPTTSIGFPALEKPLGDFNDLSQLVKKKPRRH) form a disordered region. The span at 342–359 (ENQQHGSKRPLSQPTTSI) shows a compositional bias: polar residues.

Belongs to the NASP family. Homodimer. The homodimer interacts with a histone tetramer containing H3 and H4; the interaction is direct. The homodimer interacts with heterodimeric histone H2A and H2B; the interaction is direct. Component of the nuclear histone acetyltransferase B (HAT-B) complex composed of at least HAT1, HAT2 and HIF1. Does not interact with HAT1 in the absence of HAT2. Interacts with histones H3 and H4 in a HAT1/HAT2 dependent manner. Interaction with heterotetrameric histone H3 and H4 precludes interaction with dimeric histone H2A and H2B, irrespective of the fact that their binding involves non-identical regions of the protein.

It localises to the nucleus. Functionally, histone H3 and H4 specific chaperone component of the nuclear histone acetyltransferase B (HAT-B) complex. Involved in chromatin assembly and telomere silencing. The polypeptide is HAT1-interacting factor 1 (HIF1) (Saccharomyces cerevisiae (strain ATCC 204508 / S288c) (Baker's yeast)).